A 260-amino-acid polypeptide reads, in one-letter code: Intermembrane phospholipid transport system permease protein MlaE (260 aa).

Topologically, residues 1–50 are cytoplasmic; sequence MLLNALASLGHKGIKTLRTFGRAGLMLFNALVGKPEFRKHAPLLVRQLYN. Residues 51–71 traverse the membrane as a helical segment; it reads VGVLSMLIIVVSGVFIGMVLG. Topologically, residues 72–88 are periplasmic; the sequence is LQGYLVLTTYSAETSLG. The chain crosses the membrane as a helical span at residues 89 to 109; the sequence is MLVALSLLRELGPVVAALLFA. Topologically, residues 110–147 are cytoplasmic; that stretch reads GRAGSALTAEIGLMRATEQLSSMEMMAVDPLRRVISPR. Residues 148 to 168 form a helical membrane-spanning segment; the sequence is FWAGVISLPLLTVIFVAVGIW. Over 169-198 the chain is Periplasmic; the sequence is GGSLVGVSWKGIDSGFFWSAMQNAVDWRMD. Residues 199–219 traverse the membrane as a helical segment; it reads LVNCLIKSVVFAITVTWISLF. At 220–238 the chain is on the cytoplasmic side; sequence NGYDAIPTSAGISRATTRT. Residues 239–259 traverse the membrane as a helical segment; it reads VVHSSLAVLGLDFVLTALMFG. Residue N260 is a topological domain, periplasmic.

This sequence belongs to the MlaE permease family. In terms of assembly, the complex is composed of two ATP-binding proteins (MlaF), two transmembrane proteins (MlaE), two cytoplasmic solute-binding proteins (MlaB) and six periplasmic solute-binding proteins (MlaD).

It localises to the cell inner membrane. Its function is as follows. Part of the ABC transporter complex MlaFEDB, which is involved in a phospholipid transport pathway that maintains lipid asymmetry in the outer membrane by retrograde trafficking of phospholipids from the outer membrane to the inner membrane. Probably responsible for the translocation of the substrate across the membrane. This chain is Intermembrane phospholipid transport system permease protein MlaE, found in Escherichia coli O157:H7.